We begin with the raw amino-acid sequence, 324 residues long: GTPase Era (324 aa).

Residues 31 to 199 enclose the Era-type G domain; sequence KSGFIGIIGR…QELLVEHLEH (169 aa). Residues 39–46 are G1; sequence GRPNVGKS. Position 39–46 (39–46) interacts with GTP; the sequence is GRPNVGKS. Residues 65-69 form a G2 region; the sequence is QTTRN. The interval 86–89 is G3; it reads DTPG. GTP contacts are provided by residues 86–90 and 148–151; these read DTPGI and NKVD. Residues 148-151 form a G4 region; sequence NKVD. Positions 178 to 180 are G5; the sequence is FSA. The KH type-2 domain maps to 230-306; that stretch reads TREEVPHSVA…YLELFVKVQP (77 aa).

Belongs to the TRAFAC class TrmE-Era-EngA-EngB-Septin-like GTPase superfamily. Era GTPase family. In terms of assembly, monomer.

It localises to the cytoplasm. The protein localises to the cell inner membrane. Its function is as follows. An essential GTPase that binds both GDP and GTP, with rapid nucleotide exchange. Plays a role in 16S rRNA processing and 30S ribosomal subunit biogenesis and possibly also in cell cycle regulation and energy metabolism. In Nostoc sp. (strain PCC 7120 / SAG 25.82 / UTEX 2576), this protein is GTPase Era.